Here is a 374-residue protein sequence, read N- to C-terminus: UDP-N-acetylglucosamine--N-acetylmuramyl-(pentapeptide) pyrophosphoryl-undecaprenol N-acetylglucosamine transferase (374 aa).

UDP-N-acetyl-alpha-D-glucosamine-binding positions include 13 to 15, Asn-124, Arg-165, Ser-193, and Gln-294; that span reads TGG.

Belongs to the glycosyltransferase 28 family. MurG subfamily.

It localises to the cell inner membrane. It catalyses the reaction di-trans,octa-cis-undecaprenyl diphospho-N-acetyl-alpha-D-muramoyl-L-alanyl-D-glutamyl-meso-2,6-diaminopimeloyl-D-alanyl-D-alanine + UDP-N-acetyl-alpha-D-glucosamine = di-trans,octa-cis-undecaprenyl diphospho-[N-acetyl-alpha-D-glucosaminyl-(1-&gt;4)]-N-acetyl-alpha-D-muramoyl-L-alanyl-D-glutamyl-meso-2,6-diaminopimeloyl-D-alanyl-D-alanine + UDP + H(+). Its pathway is cell wall biogenesis; peptidoglycan biosynthesis. In terms of biological role, cell wall formation. Catalyzes the transfer of a GlcNAc subunit on undecaprenyl-pyrophosphoryl-MurNAc-pentapeptide (lipid intermediate I) to form undecaprenyl-pyrophosphoryl-MurNAc-(pentapeptide)GlcNAc (lipid intermediate II). This chain is UDP-N-acetylglucosamine--N-acetylmuramyl-(pentapeptide) pyrophosphoryl-undecaprenol N-acetylglucosamine transferase, found in Rhizobium leguminosarum bv. trifolii (strain WSM2304).